Consider the following 176-residue polypeptide: Vitamin K epoxide reductase complex subunit 1-like protein 1 (176 aa).

Topologically, residues 1 to 13 (MAAPVLLRVSVPR) are cytoplasmic. The helical transmembrane segment at 14–36 (WERVARYAVCAAGILLSIYAYHV) threads the bilayer. Topologically, residues 37–87 (EREKERDPEHRALCDLGPWVKCSAALASRWGRGFGLLGSIFGKDGVLNQPN) are lumenal. Cys50 and Cys58 are disulfide-bonded. (S)-warfarin is bound at residue Asn87. A helical transmembrane segment spans residues 88–102 (SVFGLIFYILQLLLG). Residues 103-107 (MTASA) are Cytoplasmic-facing. Residues 108-135 (VAALVLMTSSIVSVVGSLYLAYILYFVL) traverse the membrane as a helical segment. Topologically, residues 136-138 (KEF) are lumenal. Cys139 and Cys142 are joined by a disulfide. Residues 139–160 (CIICVTTYVLNFLLLIINYKRL) traverse the membrane as a helical segment. Phylloquinone-binding residues include Cys142 and Tyr146. Tyr146 serves as a coordination point for (S)-warfarin. The Cytoplasmic segment spans residues 161–176 (VYLNEAWKRQLQPKED).

The protein belongs to the VKOR family. In terms of tissue distribution, detected in testis and lung.

It is found in the endoplasmic reticulum membrane. The catalysed reaction is phylloquinone + [protein]-disulfide + H2O = 2,3-epoxyphylloquinone + [protein]-dithiol. It carries out the reaction phylloquinol + [protein]-disulfide = phylloquinone + [protein]-dithiol. With respect to regulation, inhibited by warfarin (coumadin). Warfarin locks VKORC1 in both redox states into the closed conformation. Its function is as follows. Involved in vitamin K metabolism. Can reduce inactive vitamin K 2,3-epoxide to active vitamin K, and may contribute to vitamin K-mediated protection against oxidative stress. Plays a role in vitamin K-dependent gamma-carboxylation of Glu residues in target proteins. In Mus musculus (Mouse), this protein is Vitamin K epoxide reductase complex subunit 1-like protein 1 (Vkorc1l1).